Reading from the N-terminus, the 494-residue chain is Aspartyl/glutamyl-tRNA(Asn/Gln) amidotransferase subunit B (494 aa).

Belongs to the GatB/GatE family. GatB subfamily. As to quaternary structure, heterotrimer of A, B and C subunits.

It carries out the reaction L-glutamyl-tRNA(Gln) + L-glutamine + ATP + H2O = L-glutaminyl-tRNA(Gln) + L-glutamate + ADP + phosphate + H(+). The enzyme catalyses L-aspartyl-tRNA(Asn) + L-glutamine + ATP + H2O = L-asparaginyl-tRNA(Asn) + L-glutamate + ADP + phosphate + 2 H(+). Functionally, allows the formation of correctly charged Asn-tRNA(Asn) or Gln-tRNA(Gln) through the transamidation of misacylated Asp-tRNA(Asn) or Glu-tRNA(Gln) in organisms which lack either or both of asparaginyl-tRNA or glutaminyl-tRNA synthetases. The reaction takes place in the presence of glutamine and ATP through an activated phospho-Asp-tRNA(Asn) or phospho-Glu-tRNA(Gln). The chain is Aspartyl/glutamyl-tRNA(Asn/Gln) amidotransferase subunit B from Rhodopseudomonas palustris (strain BisA53).